A 365-amino-acid chain; its full sequence is MSALKNYGLISIDSALHFPRSNQLQSYKRRNAKWVSPIAAVVPNFHLPMRSLEDKNRTNTDDIRSLRVITAIKTPYLPDGRFDLQAYDDLVNTQIENGAEGVIVGGTTGEGQLMSWDEHIMLIGHTVNCFGGRIKVIGNTGSNSTREAIHATEQGFAMGMHGALHINPYYGKTSIEGMNAHFQTVLHMGPTIIYNVPGRTCQDIPPQVIFKLSQNPNMAGVKECVGNNRVEEYTEKGIVVWSGNDDQCHDSRWDHGATGVISVTSNLVPGLMRKLMFEGRNSALNAKLLPLMDWLFQEPNPIGVNTALAQLGVARPVFRLPYVPLPLSKRIEFVKLVKEIGREHFVGDRDVQVLDDDDFILIGRY.

Residues 1–39 (MSALKNYGLISIDSALHFPRSNQLQSYKRRNAKWVSPIA) constitute a chloroplast transit peptide. T108 lines the pyruvate pocket. Catalysis depends on Y194, which acts as the Proton donor/acceptor. K222 (schiff-base intermediate with substrate) is an active-site residue. Residue I261 participates in pyruvate binding.

The protein belongs to the DapA family.

The protein localises to the plastid. It localises to the chloroplast. The catalysed reaction is L-aspartate 4-semialdehyde + pyruvate = (2S,4S)-4-hydroxy-2,3,4,5-tetrahydrodipicolinate + H2O + H(+). It functions in the pathway amino-acid biosynthesis; L-lysine biosynthesis via DAP pathway; (S)-tetrahydrodipicolinate from L-aspartate: step 3/4. Catalyzes the condensation of (S)-aspartate-beta-semialdehyde [(S)-ASA] and pyruvate to 4-hydroxy-tetrahydrodipicolinate (HTPA). This is 4-hydroxy-tetrahydrodipicolinate synthase 1, chloroplastic (DHDPS1) from Arabidopsis thaliana (Mouse-ear cress).